Consider the following 162-residue polypeptide: MAQDAITAVINSADVQGKYLDTAALEKLKAYFSTGELRVRAATTISANAAAIVKEAVAKSLLYSDITRPGGNMYTTRRYAACIRDLDYYLRYATYAMLAGDPSILDERVLNGLKETYNSLGVPVGATVQAIQAIKEVTASLVGADAGKEMGIYLDYISSGLS.

Asn-72 carries the N4-methylasparagine modification. Cys-82 contacts (2R,3E)-phycocyanobilin.

This sequence belongs to the phycobiliprotein family. In terms of assembly, heterohexamer of two alpha chains, one alpha-B chain and three beta chains. Contains one covalently linked phycocyanobilin chromophore. The chromophore is added by phycocyanobilin lyase CpcS 1.

It is found in the cellular thylakoid membrane. Its function is as follows. Light-harvesting photosynthetic bile pigment-protein from the phycobiliprotein complex. Allophycocyanin has a maximum absorption at approximately 650 to 653 nanometers. The protein is Allophycocyanin subunit beta (apcB) of Nostoc sp. (strain PCC 7120 / SAG 25.82 / UTEX 2576).